Reading from the N-terminus, the 428-residue chain is 5'-nucleotidase domain-containing protein 4 (428 aa).

Aspartate 22 functions as the Nucleophile in the catalytic mechanism. Mg(2+) contacts are provided by aspartate 22, aspartate 24, and aspartate 317. Residue aspartate 24 is the Proton donor of the active site.

Belongs to the 5'(3')-deoxyribonucleotidase family.

The polypeptide is 5'-nucleotidase domain-containing protein 4 (NT5DC4) (Homo sapiens (Human)).